The sequence spans 365 residues: Tubulin-like protein CetZ (365 aa).

Residues 10–14 (QCGTK), 103–105 (GTG), Glu136, Asn163, and Asn181 each bind GTP.

Belongs to the CetZ family.

It localises to the cytoplasm. Its function is as follows. Involved in cell shape control. The chain is Tubulin-like protein CetZ from Pyrococcus horikoshii (strain ATCC 700860 / DSM 12428 / JCM 9974 / NBRC 100139 / OT-3).